The following is a 62-amino-acid chain: Alpha-toxin Tf4 (62 aa).

The LCN-type CS-alpha/beta domain maps to 2-62; sequence KEGYPADSKG…SVWDSATNKC (61 aa). 4 disulfide bridges follow: Cys-12-Cys-62, Cys-16-Cys-38, Cys-24-Cys-43, and Cys-28-Cys-45. Position 62 is a cysteine amide (Cys-62).

As to expression, expressed by the venom gland.

It localises to the secreted. Its function is as follows. Alpha toxins bind voltage-independently at site-3 of sodium channels (Nav) and inhibit the inactivation of the activated channels, thereby blocking neuronal transmission. This toxin is toxic to frogs but non-toxic to insect larvae (T.molitor), mammals (rats) and crustaceans (crabs) at the doses assayed. The sequence is that of Alpha-toxin Tf4 from Tityus fasciolatus (Central Brazilian scorpion).